A 55-amino-acid polypeptide reads, in one-letter code: ATP synthase F(0) complex subunit 8 (55 aa).

A helical transmembrane segment spans residues Ala7–Ile24. Positions Thr34–Thr55 are disordered.

Belongs to the ATPase protein 8 family. As to quaternary structure, component of the ATP synthase complex composed at least of ATP5F1A/subunit alpha, ATP5F1B/subunit beta, ATP5MC1/subunit c (homooctomer), MT-ATP6/subunit a, MT-ATP8/subunit 8, ATP5ME/subunit e, ATP5MF/subunit f, ATP5MG/subunit g, ATP5MK/subunit k, ATP5MJ/subunit j, ATP5F1C/subunit gamma, ATP5F1D/subunit delta, ATP5F1E/subunit epsilon, ATP5PF/subunit F6, ATP5PB/subunit b, ATP5PD/subunit d, ATP5PO/subunit OSCP. ATP synthase complex consists of a soluble F(1) head domain (subunits alpha(3) and beta(3)) - the catalytic core - and a membrane F(0) domain - the membrane proton channel (subunits c, a, 8, e, f, g, k and j). These two domains are linked by a central stalk (subunits gamma, delta, and epsilon) rotating inside the F1 region and a stationary peripheral stalk (subunits F6, b, d, and OSCP).

It is found in the mitochondrion membrane. Functionally, subunit 8, of the mitochondrial membrane ATP synthase complex (F(1)F(0) ATP synthase or Complex V) that produces ATP from ADP in the presence of a proton gradient across the membrane which is generated by electron transport complexes of the respiratory chain. ATP synthase complex consist of a soluble F(1) head domain - the catalytic core - and a membrane F(1) domain - the membrane proton channel. These two domains are linked by a central stalk rotating inside the F(1) region and a stationary peripheral stalk. During catalysis, ATP synthesis in the catalytic domain of F(1) is coupled via a rotary mechanism of the central stalk subunits to proton translocation. In vivo, can only synthesize ATP although its ATP hydrolase activity can be activated artificially in vitro. Part of the complex F(0) domain. This is ATP synthase F(0) complex subunit 8 from Aythya americana (Redhead).